The following is a 305-amino-acid chain: Peroxisome assembly protein 26 (305 aa).

Residues 1 to 246 (MKSDASTSAA…RRLWGSVVSH (246 aa)) are Cytoplasmic-facing. A helical; Signal-anchor for type II membrane protein membrane pass occupies residues 247–267 (LLSQPFRKGLLAALILCLLIL). Topologically, residues 268–305 (RFDPAAPSSLPFLYQLTQLFRRIQKATLSRLYPLALRD) are peroxisomal matrix.

Belongs to the peroxin-26 family. In terms of assembly, interacts (via its cytoplasmic domain) with PEX6; interaction is direct and is ATP-dependent. Interacts with PEX1; interaction is indirect and is mediated via interaction with PEX6.

Its subcellular location is the peroxisome membrane. Peroxisomal docking factor that anchors PEX1 and PEX6 to peroxisome membranes. PEX26 is therefore required for the formation of the PEX1-PEX6 AAA ATPase complex, a complex that mediates the extraction of the PEX5 receptor from peroxisomal membrane. This Mus musculus (Mouse) protein is Peroxisome assembly protein 26.